Consider the following 407-residue polypeptide: MHVDTLWSNVHLITLDGEGLGVIRDGVLACADGRIVHVGPAGSDANLRPTTRIDGEGRWMSPGLIDCHTHLVYAGNRANEFEQRLQGISYAEIARAGGGIVSTVRATRAATPEQLASESRPRLLAMRAEGVTTLEIKSGYGLTLPDERKQLQVARALGEGCRVNVVTTFLGAHAIPPGREAQEYTDEVCNVMIPAIAAEGLAEAVDVFCENIAFSPAQARQVFEAARAHGLAIKIHAEQLSNQHGAELAASFGALSADHIEHLDDAGIAAMAAAGTVAVLLPGAFYFTRDTTLPPIAALRAAGVPLALATDSNPGTSPLTSPLLAMNMGATLFRLTVDECIAGFTREAARALGRGDRIGRLAIGMDCDLAIWDIDAPADLVYRIGFNPLHARVVRGQPDLPASWSNT.

Residues His-68 and His-70 each contribute to the Fe(3+) site. Residues His-68 and His-70 each coordinate Zn(2+). The 4-imidazolone-5-propanoate site is built by Arg-77, Tyr-140, and His-173. Tyr-140 contacts N-formimidoyl-L-glutamate. His-236 is a binding site for Fe(3+). Residue His-236 participates in Zn(2+) binding. Gln-239 is a binding site for 4-imidazolone-5-propanoate. Residue Asp-311 coordinates Fe(3+). Position 311 (Asp-311) interacts with Zn(2+). Positions 313 and 315 each coordinate N-formimidoyl-L-glutamate. A 4-imidazolone-5-propanoate-binding site is contributed by Thr-316.

It belongs to the metallo-dependent hydrolases superfamily. HutI family. The cofactor is Zn(2+). Fe(3+) is required as a cofactor.

Its subcellular location is the cytoplasm. It carries out the reaction 4-imidazolone-5-propanoate + H2O = N-formimidoyl-L-glutamate. It functions in the pathway amino-acid degradation; L-histidine degradation into L-glutamate; N-formimidoyl-L-glutamate from L-histidine: step 3/3. Catalyzes the hydrolytic cleavage of the carbon-nitrogen bond in imidazolone-5-propanoate to yield N-formimidoyl-L-glutamate. It is the third step in the universal histidine degradation pathway. This is Imidazolonepropionase from Stenotrophomonas maltophilia (strain R551-3).